The following is a 316-amino-acid chain: Pantothenate kinase (316 aa).

95 to 102 contacts ATP; the sequence is GSVAVGKS.

The protein belongs to the prokaryotic pantothenate kinase family.

Its subcellular location is the cytoplasm. It catalyses the reaction (R)-pantothenate + ATP = (R)-4'-phosphopantothenate + ADP + H(+). It functions in the pathway cofactor biosynthesis; coenzyme A biosynthesis; CoA from (R)-pantothenate: step 1/5. This Pectobacterium carotovorum subsp. carotovorum (strain PC1) protein is Pantothenate kinase.